Reading from the N-terminus, the 884-residue chain is Chondroitin sulfate synthase 3 (884 aa).

Topologically, residues 1–7 are cytoplasmic; it reads MAVRSRR. Residues 8-28 form a helical; Signal-anchor for type II membrane protein membrane-spanning segment; the sequence is PWVSVALGLVLGFTAASWLIA. At 29-884 the chain is on the lumenal side; it reads PRVAELSEKR…LGVRDNRTLS (856 aa). The interval 47–164 is disordered; sequence YYGRSATGPR…NGSGDGGAAV (118 aa). 2 stretches are compositionally biased toward low complexity: residues 60 to 69 and 84 to 96; these read QQLLPQPQSR and PGPQ…PGGP. N155 and N281 each carry an N-linked (GlcNAc...) asparagine glycan. The interval 437–456 is disordered; sequence SNSEVSKEDQQLGRTPSFNH. N712 is a glycosylation site (N-linked (GlcNAc...) asparagine). A divalent metal cation contacts are provided by D722 and H836. A glycan (N-linked (GlcNAc...) asparagine) is linked at N880.

This sequence belongs to the chondroitin N-acetylgalactosaminyltransferase family. Co(2+) serves as cofactor. Mn(2+) is required as a cofactor. Requires Cd(2+) as cofactor.

The protein resides in the golgi apparatus. The protein localises to the golgi stack membrane. The catalysed reaction is 3-O-(beta-D-GlcA-(1-&gt;3)-beta-D-GalNAc-(1-&gt;4)-beta-D-GlcA-(1-&gt;3)-beta-D-Gal-(1-&gt;3)-beta-D-Gal-(1-&gt;4)-beta-D-Xyl)-L-seryl-[protein] + UDP-N-acetyl-alpha-D-galactosamine = 3-O-(beta-D-GalNAc-(1-&gt;4)-beta-D-GlcA-(1-&gt;3)-beta-D-GalNAc-(1-&gt;4)-beta-D-GlcA-(1-&gt;3)-beta-D-Gal-(1-&gt;3)-beta-D-Gal-(1-&gt;4)-beta-D-Xyl)-L-seryl-[protein] + UDP + H(+). It catalyses the reaction 3-O-{beta-D-GlcA-(1-&gt;3)-[beta-D-GalNAc-(1-&gt;4)-beta-D-GlcA-(1-&gt;3)](n)-beta-D-GalNAc-(1-&gt;4)-beta-D-GlcA-(1-&gt;3)-beta-D-Gal-(1-&gt;3)-beta-D-Gal-(1-&gt;4)-beta-D-Xyl}-L-seryl-[protein] + UDP-N-acetyl-alpha-D-galactosamine = 3-O-{[beta-D-GalNAc-(1-&gt;4)-beta-D-GlcA-(1-&gt;3)](n+1)-beta-D-GalNAc-(1-&gt;4)-beta-D-GlcA-(1-&gt;3)-beta-D-Gal-(1-&gt;3)-beta-D-Gal-(1-&gt;4)-beta-D-Xyl}-L-seryl-[protein] + UDP + H(+). It carries out the reaction 3-O-(beta-D-GalNAc-(1-&gt;4)-beta-D-GlcA-(1-&gt;3)-beta-D-Gal-(1-&gt;3)-beta-D-Gal-(1-&gt;4)-beta-D-Xyl)-L-seryl-[protein] + UDP-alpha-D-glucuronate = 3-O-(beta-D-GlcA-(1-&gt;3)-beta-D-GalNAc-(1-&gt;4)-beta-D-GlcA-(1-&gt;3)-beta-D-Gal-(1-&gt;3)-beta-D-Gal-(1-&gt;4)-beta-D-Xyl)-L-seryl-[protein] + UDP + H(+). The enzyme catalyses 3-O-{[beta-D-GalNAc-(1-&gt;4)-beta-D-GlcA-(1-&gt;3)](n)-beta-D-GalNAc-(1-&gt;4)-beta-D-GlcA-(1-&gt;3)-beta-D-Gal-(1-&gt;3)-beta-D-Gal-(1-&gt;4)-beta-D-Xyl}-L-seryl-[protein] + UDP-alpha-D-glucuronate = 3-O-{beta-D-GlcA-(1-&gt;3)-[beta-D-GalNAc-(1-&gt;4)-beta-D-GlcA-(1-&gt;3)](n)-beta-D-GalNAc-(1-&gt;4)-beta-D-GlcA-(1-&gt;3)-beta-D-Gal-(1-&gt;3)-beta-D-Gal-(1-&gt;4)-beta-D-Xyl}-L-seryl-[protein] + UDP + H(+). Functionally, has both beta-1,3-glucuronic acid and beta-1,4-N-acetylgalactosamine transferase activity. Transfers glucuronic acid (GlcUA) from UDP-GlcUA and N-acetylgalactosamine (GalNAc) from UDP-GalNAc to the non-reducing end of the elongating chondroitin polymer. Specific activity is much reduced compared to CHSY1. The chain is Chondroitin sulfate synthase 3 (Chsy3) from Mus musculus (Mouse).